Here is a 1461-residue protein sequence, read N- to C-terminus: Gag-Pro-Pol polyprotein (1461 aa).

Residue Gly-2 is the site of N-myristoyl glycine; by host attachment. A PTAP/PSAP motif motif is present at residues 94–97; that stretch reads PSAP. The disordered stretch occupies residues 94–121; the sequence is PSAPAAPVPTPICPTTTPPPPPPPSPEA. A compositionally biased stretch (pro residues) spans 97–121; that stretch reads PAAPVPTPICPTTTPPPPPPPSPEA. Residues 124–127 carry the PPXY motif motif; the sequence is PPPY. A PTAP/PSAP motif motif is present at residues 130–133; that stretch reads PTTT. 2 consecutive CCHC-type zinc fingers follow at residues 361 to 378 and 384 to 401; these read QPCFRCGKVGHWSRDCTQ and GPCPLCQDPSHWKRDCPQ. A disordered region spans residues 399 to 425; the sequence is CPQLKPPQEEGEPLLLDLPSTSGTTEE. Positions 473–551 constitute a Peptidase A2 domain; sequence TQALLDTGAD…NKWTIIGRDA (79 aa). Residue Asp-478 is the For protease activity; shared with dimeric partner of the active site. The Reverse transcriptase domain maps to 612 to 802; the sequence is LEAGHIEPYS…GQIRFLGQVI (191 aa). Mg(2+) is bound by residues Asp-678, Asp-753, Asp-754, Asp-1038, Glu-1073, Asp-1095, Asp-1156, Asp-1229, and Asp-1286. The 136-residue stretch at 1029 to 1164 folds into the RNase H type-1 domain; that stretch reads LDTAPCLFSD…TDSLILAPLV (136 aa). The region spanning 1218–1387 is the Integrase catalytic domain; it reads RGLLPNHIWQ…PPIPEASTPP (170 aa). The segment at residues 1392 to 1441 is a DNA-binding region (integrase-type); the sequence is KWFYYKLPGLTNQRWKGPLQSLQEAAGAALLSIDGSPRWIPWRFLKKAAC.

Homodimer; the homodimers are part of the immature particles. Interacts with human TSG101 and NEDD4; these interactions are essential for budding and release of viral particles. In terms of assembly, homodimer; further assembles as homohexamers. The cofactor is Mg(2+). In terms of processing, phosphorylation of the matrix protein p19 by MAPK1 seems to play a role in budding. Post-translationally, myristoylated. Myristoylation of the matrix (MA) domain mediates the transport and binding of Gag polyproteins to the host plasma membrane and is required for the assembly of viral particles. Specific enzymatic cleavages by the viral protease yield mature proteins. The polyprotein is cleaved during and after budding, this process is termed maturation. The protease is autoproteolytically processed at its N- and C-termini.

It localises to the virion. The catalysed reaction is Endonucleolytic cleavage to 5'-phosphomonoester.. It catalyses the reaction DNA(n) + a 2'-deoxyribonucleoside 5'-triphosphate = DNA(n+1) + diphosphate. Functionally, the matrix domain targets Gag, Gag-Pro and Gag-Pro-Pol polyproteins to the plasma membrane via a multipartite membrane binding signal, that includes its myristoylated N-terminus. In terms of biological role, matrix protein. Forms the spherical core of the virus that encapsulates the genomic RNA-nucleocapsid complex. Its function is as follows. Binds strongly to viral nucleic acids and promote their aggregation. Also destabilizes the nucleic acids duplexes via highly structured zinc-binding motifs. Functionally, the aspartyl protease mediates proteolytic cleavages of Gag and Gag-Pol polyproteins during or shortly after the release of the virion from the plasma membrane. Cleavages take place as an ordered, step-wise cascade to yield mature proteins. This process is called maturation. Displays maximal activity during the budding process just prior to particle release from the cell (Potential). Cleaves the translation initiation factor eIF4G leading to the inhibition of host cap-dependent translation. In terms of biological role, RT is a multifunctional enzyme that converts the viral RNA genome into dsDNA in the cytoplasm, shortly after virus entry into the cell. This enzyme displays a DNA polymerase activity that can copy either DNA or RNA templates, and a ribonuclease H (RNase H) activity that cleaves the RNA strand of RNA-DNA heteroduplexes in a partially processive 3' to 5'-endonucleasic mode. Conversion of viral genomic RNA into dsDNA requires many steps. A tRNA-Pro binds to the primer-binding site (PBS) situated at the 5'-end of the viral RNA. RT uses the 3' end of the tRNA primer to perform a short round of RNA-dependent minus-strand DNA synthesis. The reading proceeds through the U5 region and ends after the repeated (R) region which is present at both ends of viral RNA. The portion of the RNA-DNA heteroduplex is digested by the RNase H, resulting in a ssDNA product attached to the tRNA primer. This ssDNA/tRNA hybridizes with the identical R region situated at the 3' end of viral RNA. This template exchange, known as minus-strand DNA strong stop transfer, can be either intra- or intermolecular. RT uses the 3' end of this newly synthesized short ssDNA to perform the RNA-dependent minus-strand DNA synthesis of the whole template. RNase H digests the RNA template except for a polypurine tract (PPT) situated at the 5' end of the genome. It is not clear if both polymerase and RNase H activities are simultaneous. RNase H probably can proceed both in a polymerase-dependent (RNA cut into small fragments by the same RT performing DNA synthesis) and a polymerase-independent mode (cleavage of remaining RNA fragments by free RTs). Secondly, RT performs DNA-directed plus-strand DNA synthesis using the PPT that has not been removed by RNase H as primer. PPT and tRNA primers are then removed by RNase H. The 3' and 5' ssDNA PBS regions hybridize to form a circular dsDNA intermediate. Strand displacement synthesis by RT to the PBS and PPT ends produces a blunt ended, linear dsDNA copy of the viral genome that includes long terminal repeats (LTRs) at both ends. Catalyzes viral DNA integration into the host chromosome, by performing a series of DNA cutting and joining reactions. The sequence is that of Gag-Pro-Pol polyprotein (gag-pro-pol) from Human T-cell leukemia virus 2 (HTLV-2).